A 230-amino-acid chain; its full sequence is Cytidylate kinase (230 aa).

11 to 19 serves as a coordination point for ATP; sequence GPAAAGKST.

Belongs to the cytidylate kinase family. Type 1 subfamily.

It is found in the cytoplasm. It carries out the reaction CMP + ATP = CDP + ADP. The enzyme catalyses dCMP + ATP = dCDP + ADP. This is Cytidylate kinase from Oceanobacillus iheyensis (strain DSM 14371 / CIP 107618 / JCM 11309 / KCTC 3954 / HTE831).